We begin with the raw amino-acid sequence, 106 residues long: Minor capsid protein VP2 (106 aa).

This sequence belongs to the vesivirus VP2 protein family. Homooligomer. The portal-like structure consists in 12 copies of VP2. Interacts with capsid protein VP1.

The protein localises to the virion. It is found in the host cytoplasm. Its function is as follows. Minor structural protein that forms a portal-like structure at a unique three-fold axis of symmetry, following binding to the host receptor. The virion attaches to feline junctional adhesion molecule A (F11R). Once attached, the virion is endocytosed. Acidification of the endosome induces conformational change of capsid protein thereby injecting virus genomic RNA into host cytoplasm. The channel formed by VP2 may allow the delivery of the viral genome through the host endosomal membrane. In Feline calicivirus (strain Japanese F4) (FCV), this protein is Minor capsid protein VP2.